Reading from the N-terminus, the 145-residue chain is Sperm mitochondrial-associated cysteine-rich protein (145 aa).

4 positions are modified to phosphoserine: S38, S45, S113, and S131. Residues 105–145 (CSSENKTESDSDGSGQTQDRGAQTQQSPQGGQGNWNQKKTK) form a disordered region. The segment covering 116-145 (DGSGQTQDRGAQTQQSPQGGQGNWNQKKTK) has biased composition (polar residues).

As to expression, testis. Selectively expressed in the spermatids of seminiferous tubules and in flagella of epididymal sperm.

The protein localises to the cytoplasm. It localises to the mitochondrion membrane. Its function is as follows. Involved in sperm motility. Its absence is associated with genetic background dependent male infertility. Infertility may be due to reduced sperm motility in the female reproductive tract and inability to penetrate the oocyte zona pellucida. The sequence is that of Sperm mitochondrial-associated cysteine-rich protein (Smcp) from Rattus norvegicus (Rat).